Here is a 737-residue protein sequence, read N- to C-terminus: Oligopeptide transporter 3 (737 aa).

16 helical membrane passes run 45–65, 69–89, 117–137, 153–173, 215–235, 255–275, 289–309, 357–377, 418–438, 446–466, 478–498, 532–552, 604–624, 629–649, 650–670, and 681–701; these read AWFLGLTSCVLLIFLNTFFTY, PLTISAILMQIAVLPIGKFMA, VIITIFANCGVAYGGGDAYSI, FICGLFIVLTTQILGYGWAGI, FLVALGASFIYYALPGYLFPI, VGSGYHGLGVGAFTLDWAGIS, ILNVGVGFIMFIYIIVPVCYW, LYLSPLFALSIGSGFARFTAT, WWFYILLAGSVAMSLLMSFVW, WWGMLFAFALAFIVTLPIGVI, IIGQFIIGYILPGKPIANLIF, AQLVGTVVAGVVNLGVAWWML, VWLFLIGAVLPVPVWALSKIF, WIPLINIPVISYGFAGMPPAT, PTNIASWLVTGTIFNYFVFNY, and VLSAALDAGTAFMGVLLFFAL.

This sequence belongs to the oligopeptide OPT transporter (TC 2.A.67.1) family. In terms of tissue distribution, strong expression in flowers, leaves and roots. Preferentially expressed in the vascular tissues of seedlings and mature plants as well as in pollen and developing embryos.

The protein localises to the membrane. Functionally, may be involved in the translocation of tetra- and pentapeptides across the cellular membrane in an energy-dependent manner. Also acts as a metal transporter that could be a component of the copper transport machinery. Essential for early embryo development. In Arabidopsis thaliana (Mouse-ear cress), this protein is Oligopeptide transporter 3 (OPT3).